The following is a 371-amino-acid chain: MELQEVLHMNEGEGDTSYAKNASYNLALAKVKPFLEQCIRELLRANLPNINKYIKVADLGCASGPNTLLTVRDIVQSIDKVGQEEKNELERPTIQIFLNDLFQNDFNSVFKLLPSFYRKLEKENGRKIGSCLISAMPGSFYGRLFPEESMHFLHSCYSVHWLSQVPSGLVIELGIGANKGSIYSSKGCRPPVQKAYLDQFTKDFTTFLRIHSEELFSHGRMLLTCICKGVELDARNAIDLLEMAINDLVVEGHLEEEKLDSFNLPVYIPSAEEVKCIVEEEGSFEILYLETFKVLYDAGFSIDDEHIKAEYVASSVRAVYEPILASHFGEAIIPDIFHRFAKHAAKVLPLGKGFYNNLIISLAKKPEKSDV.

Positions 18, 61, 66, 100, 101, 139, 140, and 156 each coordinate S-adenosyl-L-homocysteine. Residues Tyr-157, His-160, and Trp-161 each contribute to the theobromine site. Positions 178, 260, 262, and 263 each coordinate Mg(2+). Residue Tyr-355 participates in theobromine binding.

It belongs to the methyltransferase superfamily. Type-7 methyltransferase family. Mg(2+) serves as cofactor.

The catalysed reaction is 7-methylxanthine + S-adenosyl-L-methionine = theobromine + S-adenosyl-L-homocysteine + H(+). It functions in the pathway alkaloid biosynthesis. In terms of biological role, involved in the biosynthesis of caffeine. Catalyzes the conversion of 7-methylxanthine (7mX) to theobromine and with a lower activity of paraxanthine to caffeine. The sequence is that of Monomethylxanthine methyltransferase 2 from Coffea canephora (Robusta coffee).